The primary structure comprises 961 residues: Probable inorganic carbon transporter subunit DabA (961 aa).

Cys-406, Asp-408, His-653, and Cys-668 together coordinate Zn(2+).

This sequence belongs to the inorganic carbon transporter (TC 9.A.2) DabA family. As to quaternary structure, forms a complex with DabB. Requires Zn(2+) as cofactor.

It localises to the cell inner membrane. Part of an energy-coupled inorganic carbon pump. This Hydrogenobaculum sp. (strain Y04AAS1) protein is Probable inorganic carbon transporter subunit DabA.